Reading from the N-terminus, the 993-residue chain is Testis-expressed protein 13C (993 aa).

3 disordered regions span residues 281 to 381 (QEET…SLKK), 520 to 547 (DSKS…SHSL), and 894 to 959 (FSKS…PVNW). Positions 325–335 (GMTSQGDSSSH) are enriched in polar residues. Over residues 353-364 (SRSHSLEKKPVM) the composition is skewed to basic and acidic residues. A compositionally biased stretch (polar residues) spans 944–957 (ESQQQKPASCSSPV). Residues 955 to 984 (SPVNWACPWCNAMNFPRNKVCSKCKRVRMP) form a RanBP2-type zinc finger.

The protein belongs to the TEX13 family.

The polypeptide is Testis-expressed protein 13C (Homo sapiens (Human)).